The following is a 221-amino-acid chain: Lipoprotein-releasing system ATP-binding protein LolD (221 aa).

The ABC transporter domain occupies 6–220 (LILKNISKHY…YKLKHRLLNI (215 aa)). 42 to 49 (GSSGSGKS) contacts ATP.

Belongs to the ABC transporter superfamily. Lipoprotein translocase (TC 3.A.1.125) family. In terms of assembly, the complex is composed of two ATP-binding proteins (LolD) and two transmembrane proteins (LolC and LolE).

The protein localises to the cell inner membrane. Its function is as follows. Part of the ABC transporter complex LolCDE involved in the translocation of mature outer membrane-directed lipoproteins, from the inner membrane to the periplasmic chaperone, LolA. Responsible for the formation of the LolA-lipoprotein complex in an ATP-dependent manner. The chain is Lipoprotein-releasing system ATP-binding protein LolD from Rickettsia conorii (strain ATCC VR-613 / Malish 7).